The chain runs to 293 residues: N-acetylmannosamine kinase (293 aa).

Residues 5 to 12 (AIDIGGTK) and 133 to 140 (GVGGGLVI) contribute to the ATP site. 4 residues coordinate Zn(2+): H157, C167, C169, and C174.

It belongs to the ROK (NagC/XylR) family. NanK subfamily. In terms of assembly, homodimer.

The catalysed reaction is an N-acyl-D-mannosamine + ATP = an N-acyl-D-mannosamine 6-phosphate + ADP + H(+). It participates in amino-sugar metabolism; N-acetylneuraminate degradation; D-fructose 6-phosphate from N-acetylneuraminate: step 2/5. Its function is as follows. Catalyzes the phosphorylation of N-acetylmannosamine (ManNAc) to ManNAc-6-P. This is N-acetylmannosamine kinase from Vibrio vulnificus (strain YJ016).